The following is a 785-amino-acid chain: Endonuclease MutS2 (785 aa).

An ATP-binding site is contributed by 334–341; sequence GPNTGGKT. In terms of domain architecture, Smr spans 710–785; it reads LDLRGQRYDE…GNGATIVKLK (76 aa).

It belongs to the DNA mismatch repair MutS family. MutS2 subfamily. Homodimer. Binds to stalled ribosomes, contacting rRNA.

Its function is as follows. Endonuclease that is involved in the suppression of homologous recombination and thus may have a key role in the control of bacterial genetic diversity. In terms of biological role, acts as a ribosome collision sensor, splitting the ribosome into its 2 subunits. Detects stalled/collided 70S ribosomes which it binds and splits by an ATP-hydrolysis driven conformational change. Acts upstream of the ribosome quality control system (RQC), a ribosome-associated complex that mediates the extraction of incompletely synthesized nascent chains from stalled ribosomes and their subsequent degradation. Probably generates substrates for RQC. The chain is Endonuclease MutS2 from Lactobacillus helveticus (strain DPC 4571).